The primary structure comprises 759 residues: Catalase-peroxidase (759 aa).

The segment at methionine 1–asparagine 24 is disordered. Positions tryptophan 96–tyrosine 242 form a cross-link, tryptophyl-tyrosyl-methioninium (Trp-Tyr) (with M-268). Catalysis depends on histidine 97, which acts as the Proton acceptor. The segment at residues tyrosine 242–methionine 268 is a cross-link (tryptophyl-tyrosyl-methioninium (Tyr-Met) (with W-96)). Residue histidine 283 participates in heme b binding.

It belongs to the peroxidase family. Peroxidase/catalase subfamily. Homodimer or homotetramer. It depends on heme b as a cofactor. In terms of processing, formation of the three residue Trp-Tyr-Met cross-link is important for the catalase, but not the peroxidase activity of the enzyme.

It is found in the cytoplasm. The enzyme catalyses H2O2 + AH2 = A + 2 H2O. The catalysed reaction is 2 H2O2 = O2 + 2 H2O. Bifunctional enzyme with both catalase and broad-spectrum peroxidase activity. The protein is Catalase-peroxidase of Aspergillus fumigatus (strain CBS 144.89 / FGSC A1163 / CEA10) (Neosartorya fumigata).